The primary structure comprises 291 residues: MTKINPYKGILVELKDIVFTSSSDQIKLPINTFKSILCCGATAQYQCGKINRAQYYSRLARDFALSLADVTALFDTVQATIRPEESFLAFLAELKSRFGEQLKLYAVANMSREDYAMLKSLPIDWSLFDGVFLSADLGMRKPELRFFRHVLESISMKPEDTILVDNDTDNILCALSMGLKGILFGSTSVPQALTNLLEYDHISRAEQFLRSHAKSLHSVTHTGVTIRENFAQLLILEATGDIDLVELEYHPTTWNYFIGTQSSQLLLHKHNADRMTTMTSCWLVSAFLVVS.

It belongs to the HAD-like hydrolase superfamily.

It catalyses the reaction (2E,6E)-farnesyl diphosphate = (S,S)-drim-8-en-11-yl diphosphate. It participates in secondary metabolite biosynthesis; terpenoid biosynthesis. Functionally, sesquiterpene cyclase; part of the gene cluster that mediates the biosynthesis of astellolides, drimane-type sesquiterpene esters that show antimicrobial, anti-inflammatory, and anti-tumor activities. The first step in astellolide biosynthesis is performed by the sesquiterpene cyclase astC that catalyzes the formation of drimanyl pyrophosphate from farnesyl pyrophosphate. Drimanyl pyrophosphate is then dephosphorylated by the sesquiterpene phosphatase astI to produce drimanyl monophosphate which is further dephosphorylated to drim-8-ene-11-ol by atsK. Drim-8-ene-11-ol is converted to confertifolin, probably by the cytochrome P450 monooxygenase astD and/or the dehydrogenase astE. The cytochrome P450 monooxygenases astB, astF and astJ then hydroxylate confertifolin at C6, C14, or C15 to form trihydroxy confertifolin. The nonribosomal peptide synthetase astA catalyzes ester bond formation between trihydroxy contifolin and benzoic acid (BA) or 4-hydroxy benzoic acid (4HBA), leading to the formation of dideacetyl astellolides A and B, respectively. Finally, the O-acetyltransferase astG converts dideacetyl astellolides A and B into deacetyl astellolides A and B. This is Sesquiterpene cyclase astC from Aspergillus oryzae (strain ATCC 42149 / RIB 40) (Yellow koji mold).